The primary structure comprises 277 residues: Ribosomal RNA small subunit methyltransferase A (277 aa).

Asn-18, Leu-20, Gly-45, Glu-66, Asp-89, and Asn-110 together coordinate S-adenosyl-L-methionine.

The protein belongs to the class I-like SAM-binding methyltransferase superfamily. rRNA adenine N(6)-methyltransferase family. RsmA subfamily.

It is found in the cytoplasm. The catalysed reaction is adenosine(1518)/adenosine(1519) in 16S rRNA + 4 S-adenosyl-L-methionine = N(6)-dimethyladenosine(1518)/N(6)-dimethyladenosine(1519) in 16S rRNA + 4 S-adenosyl-L-homocysteine + 4 H(+). In terms of biological role, specifically dimethylates two adjacent adenosines (A1518 and A1519) in the loop of a conserved hairpin near the 3'-end of 16S rRNA in the 30S particle. May play a critical role in biogenesis of 30S subunits. The polypeptide is Ribosomal RNA small subunit methyltransferase A (Cupriavidus taiwanensis (strain DSM 17343 / BCRC 17206 / CCUG 44338 / CIP 107171 / LMG 19424 / R1) (Ralstonia taiwanensis (strain LMG 19424))).